A 172-amino-acid chain; its full sequence is Cytochrome c oxidase subunit 4 isoform 2, mitochondrial (172 aa).

Residues 1 to 34 (MFSRAARSLVMRTGLRTRGTGTHSPGDAAGSQRR) constitute a mitochondrion transit peptide. The span at 13 to 22 (TGLRTRGTGT) shows a compositional bias: low complexity. A disordered region spans residues 13-32 (TGLRTRGTGTHSPGDAAGSQ). Topologically, residues 35-101 (MTPYVDCYAQ…TFAEMNHRSN (67 aa)) are mitochondrial matrix. A helical membrane pass occupies residues 102–127 (EWKTVMGCVFFFIGFTALVIWWQRVY). Over 128–172 (VFPKKVVTLTEERKAQQLQRLLDMKSNPIQGLAAHWDYEKKEWKK) the chain is Mitochondrial intermembrane.

The protein belongs to the cytochrome c oxidase IV family. In terms of assembly, component of the cytochrome c oxidase (complex IV, CIV), a multisubunit enzyme composed of 14 subunits. The complex is composed of a catalytic core of 3 subunits MT-CO1, MT-CO2 and MT-CO3, encoded in the mitochondrial DNA, and 11 supernumerary subunits COX4I, COX5A, COX5B, COX6A, COX6B, COX6C, COX7A, COX7B, COX7C, COX8 and NDUFA4, which are encoded in the nuclear genome. The complex exists as a monomer or a dimer and forms supercomplexes (SCs) in the inner mitochondrial membrane with NADH-ubiquinone oxidoreductase (complex I, CI) and ubiquinol-cytochrome c oxidoreductase (cytochrome b-c1 complex, complex III, CIII), resulting in different assemblies (supercomplex SCI(1)III(2)IV(1) and megacomplex MCI(2)III(2)IV(2)).

The protein resides in the mitochondrion inner membrane. The protein operates within energy metabolism; oxidative phosphorylation. Functionally, component of the cytochrome c oxidase, the last enzyme in the mitochondrial electron transport chain which drives oxidative phosphorylation. The respiratory chain contains 3 multisubunit complexes succinate dehydrogenase (complex II, CII), ubiquinol-cytochrome c oxidoreductase (cytochrome b-c1 complex, complex III, CIII) and cytochrome c oxidase (complex IV, CIV), that cooperate to transfer electrons derived from NADH and succinate to molecular oxygen, creating an electrochemical gradient over the inner membrane that drives transmembrane transport and the ATP synthase. Cytochrome c oxidase is the component of the respiratory chain that catalyzes the reduction of oxygen to water. Electrons originating from reduced cytochrome c in the intermembrane space (IMS) are transferred via the dinuclear copper A center (CU(A)) of subunit 2 and heme A of subunit 1 to the active site in subunit 1, a binuclear center (BNC) formed by heme A3 and copper B (CU(B)). The BNC reduces molecular oxygen to 2 water molecules using 4 electrons from cytochrome c in the IMS and 4 protons from the mitochondrial matrix. The protein is Cytochrome c oxidase subunit 4 isoform 2, mitochondrial (Cox4i2) of Mus musculus (Mouse).